The primary structure comprises 325 residues: Probable tRNA-dihydrouridine synthase 2 (325 aa).

An FMN-binding site is contributed by 18 to 20 (PME). The active-site Proton donor is the Cys-105. FMN contacts are provided by residues Lys-143, 208 to 210 (NGD), and 232 to 233 (GR).

The protein belongs to the Dus family. It depends on FMN as a cofactor.

The catalysed reaction is a 5,6-dihydrouridine in tRNA + NAD(+) = a uridine in tRNA + NADH + H(+). It catalyses the reaction a 5,6-dihydrouridine in tRNA + NADP(+) = a uridine in tRNA + NADPH + H(+). Its function is as follows. Catalyzes the synthesis of 5,6-dihydrouridine (D), a modified base found in the D-loop of most tRNAs, via the reduction of the C5-C6 double bond in target uridines. The polypeptide is Probable tRNA-dihydrouridine synthase 2 (dus2) (Bacillus subtilis (strain 168)).